The primary structure comprises 233 residues: ATP synthase subunit a (233 aa).

The next 5 membrane-spanning stretches (helical) occupy residues 29-49, 86-106, 118-135, 188-208, and 209-229; these read FKHV…GLIV, VFPL…LGLV, TNAA…YQGL, VLFF…LFLL, and GKVL…KGAF.

This sequence belongs to the ATPase A chain family. In terms of assembly, F-type ATPases have 2 components, CF(1) - the catalytic core - and CF(0) - the membrane proton channel. CF(1) has five subunits: alpha(3), beta(3), gamma(1), delta(1), epsilon(1). CF(0) has three main subunits: a(1), b(2) and c(9-12). The alpha and beta chains form an alternating ring which encloses part of the gamma chain. CF(1) is attached to CF(0) by a central stalk formed by the gamma and epsilon chains, while a peripheral stalk is formed by the delta and b chains.

Its subcellular location is the cell inner membrane. Its function is as follows. Key component of the proton channel; it plays a direct role in the translocation of protons across the membrane. The protein is ATP synthase subunit a of Nitratidesulfovibrio vulgaris (strain ATCC 29579 / DSM 644 / CCUG 34227 / NCIMB 8303 / VKM B-1760 / Hildenborough) (Desulfovibrio vulgaris).